The chain runs to 323 residues: Ubiquinone biosynthesis protein COQ4, mitochondrial (323 aa).

The Zn(2+) site is built by His203, Asp204, His207, and Glu219.

Belongs to the COQ4 family. In terms of assembly, component of a multi-subunit COQ enzyme complex, composed of at least COQ3, COQ4, COQ5, COQ6, COQ7 and COQ9. Requires Zn(2+) as cofactor.

The protein localises to the mitochondrion inner membrane. It carries out the reaction a 4-hydroxy-3-methoxy-5-(all-trans-polyprenyl)benzoate + H(+) = a 2-methoxy-6-(all-trans-polyprenyl)phenol + CO2. The protein operates within cofactor biosynthesis; ubiquinone biosynthesis. Functionally, lyase that catalyzes the C1-decarboxylation of 4-hydroxy-3-methoxy-5-(all-trans-polyprenyl)benzoic acid into 2-methoxy-6-(all-trans-polyprenyl)phenol during ubiquinone biosynthesis. The polypeptide is Ubiquinone biosynthesis protein COQ4, mitochondrial (Eremothecium gossypii (strain ATCC 10895 / CBS 109.51 / FGSC 9923 / NRRL Y-1056) (Yeast)).